The primary structure comprises 66 residues: Phylloseptin-S4 (66 aa).

The signal sequence occupies residues 1–22 (MAFLKKSLFLVLFLGLVSLSIC). A propeptide spanning residues 23 to 46 (EEEKRETEEEEHDQEEDDKSEEKR) is cleaved from the precursor. The disordered stretch occupies residues 25-44 (EKRETEEEEHDQEEDDKSEE). Over residues 30–41 (EEEEHDQEEDDK) the composition is skewed to acidic residues. At Leu-65 the chain carries Leucine amide.

Expressed by the skin glands.

The protein localises to the secreted. It localises to the target cell membrane. Its function is as follows. Antimicrobial peptide with high activity against Gram-positive bacteria, moderate activity against Gram-negative bacteria, and moderate activity against fungi. Acts by causing bacterial membrane disruption inducing leakage of the intracellular content followed by cell death. It adopts an alpha-helical amphipathic structure in membrane environments. Also shows highly potent antiparasitic activity against Leishmania species. Shows moderate hemolytic activity on human erythrocytes (LC(50)=33 uM). Is also active on human monocytes (IC(50)=23 uM). The polypeptide is Phylloseptin-S4 (Phyllomedusa sauvagei (Sauvage's leaf frog)).